The chain runs to 359 residues: Type-1 angiotensin II receptor (359 aa).

Residues 1–25 (MVPNYSTEETVKRIHVDCPVSGRHS) lie on the Extracellular side of the membrane. N-linked (GlcNAc...) asparagine glycosylation occurs at Asn4. Asp17 is an angiotensin II binding site. 2 cysteine pairs are disulfide-bonded: Cys18-Cys274 and Cys101-Cys180. A helical membrane pass occupies residues 26 to 55 (YIYIMVPTVYSIIFIIGIFGNSLVVIVIYC). Residues 56 to 61 (YMKLKT) are Cytoplasmic-facing. A helical membrane pass occupies residues 62–89 (VASIFLLNLALADLCFLITLPLWAAYTA). The Extracellular segment spans residues 90–98 (MEYQWPFGN). Residues 99–125 (CLCKLASAGISFNLYASVFLLTCLSID) form a helical membrane-spanning segment. At 126–141 (RYLAIVHPVKSRIRRT) the chain is on the cytoplasmic side. Residues 142–165 (MFVARVTCIVIWLLAGVASLPVII) form a helical membrane-spanning segment. At 166-190 (HRNIFFAENLNMTVCGFRYDNNNTT) the chain is on the extracellular side. An angiotensin II-binding site is contributed by Arg167. The N-linked (GlcNAc...) asparagine glycan is linked to Asn176. The angiotensin II site is built by Phe182 and Tyr184. N-linked (GlcNAc...) asparagine glycosylation is found at Asn187 and Asn188. A helical transmembrane segment spans residues 191 to 216 (LRVGLGLSKNLLGFLIPFLIILTSYT). Lys199 contributes to the angiotensin II binding site. Topologically, residues 217–239 (LIWKTLKKAYQIQRNKTRNDDIF) are cytoplasmic. Residues 240-268 (KMIVAIVFFFFFSWIPHQVFTFLDVLIQL) form a helical membrane-spanning segment. Topologically, residues 269–278 (HVITDCKITD) are extracellular. The helical transmembrane segment at 279–304 (IVDTAMPFTICIAYFNNCLNPFFYVF) threads the bilayer. Residues 305 to 359 (FGKNFKKYFLQLIKYIPPNVSTHPSLTTKMSSLSYRPPENIRLPTKKTAGSFDTE) lie on the Cytoplasmic side of the membrane.

This sequence belongs to the G-protein coupled receptor 1 family. Post-translationally, C-terminal Ser or Thr residues may be phosphorylated. As to expression, adrenal medulla.

Its subcellular location is the cell membrane. Receptor for angiotensin II, a vasoconstricting peptide, which acts as a key regulator of blood pressure and sodium retention by the kidney. The activated receptor in turn couples to G-alpha proteins G(q) (GNAQ, GNA11, GNA14 or GNA15) and thus activates phospholipase C and increases the cytosolic Ca(2+) concentrations, which in turn triggers cellular responses such as stimulation of protein kinase C. The protein is Type-1 angiotensin II receptor (AGTR1) of Meleagris gallopavo (Wild turkey).